Reading from the N-terminus, the 505-residue chain is Zealexin A1 synthase (505 aa).

A helical membrane pass occupies residues Ile7–Thr26. Position 442 (Cys442) interacts with heme.

Belongs to the cytochrome P450 family. Heme serves as cofactor.

The protein localises to the membrane. It carries out the reaction (S)-beta-macrocarpene + 3 reduced [NADPH--hemoprotein reductase] + 3 O2 = zealexin A1 + 3 oxidized [NADPH--hemoprotein reductase] + 4 H2O + 4 H(+). Functionally, involved in production of the antifungal phytoalexin zealexin A1. The enzyme sequentially oxidizes(S)-beta-macrocarpene via alcohol and aldehyde intermediates to form zealexin A1, a maize phytoalexin that provides biochemical protection against fungal infection. The polypeptide is Zealexin A1 synthase (Zea mays (Maize)).